The chain runs to 319 residues: ATP-dependent 6-phosphofructokinase (319 aa).

Residue glycine 11 coordinates ATP. 21-25 is an ADP binding site; that stretch reads RAVVR. ATP contacts are provided by residues 72-73 and 102-105; these read RC and GNGS. Asparagine 103 contacts Mg(2+). Position 125–127 (125–127) interacts with substrate; it reads TID. Catalysis depends on aspartate 127, which acts as the Proton acceptor. Residue arginine 154 coordinates ADP. Residues arginine 162 and 169–171 contribute to the substrate site; that span reads MGR. Residues 185 to 187, arginine 211, and 213 to 215 each bind ADP; these read GAE and KMH. Substrate-binding positions include glutamate 222, arginine 243, and 249–252; that span reads HIQR.

It belongs to the phosphofructokinase type A (PFKA) family. ATP-dependent PFK group I subfamily. Prokaryotic clade 'B1' sub-subfamily. Homotetramer. The cofactor is Mg(2+).

Its subcellular location is the cytoplasm. It catalyses the reaction beta-D-fructose 6-phosphate + ATP = beta-D-fructose 1,6-bisphosphate + ADP + H(+). It participates in carbohydrate degradation; glycolysis; D-glyceraldehyde 3-phosphate and glycerone phosphate from D-glucose: step 3/4. Its activity is regulated as follows. Allosterically activated by ADP and other diphosphonucleosides, and allosterically inhibited by phosphoenolpyruvate. Catalyzes the phosphorylation of D-fructose 6-phosphate to fructose 1,6-bisphosphate by ATP, the first committing step of glycolysis. In Clostridium acetobutylicum (strain ATCC 824 / DSM 792 / JCM 1419 / IAM 19013 / LMG 5710 / NBRC 13948 / NRRL B-527 / VKM B-1787 / 2291 / W), this protein is ATP-dependent 6-phosphofructokinase.